Consider the following 219-residue polypeptide: Phosphatidylserine decarboxylase proenzyme (219 aa).

Residue Ser-188 is the Schiff-base intermediate with substrate; via pyruvic acid of the active site. At Ser-188 the chain carries Pyruvic acid (Ser); by autocatalysis.

Belongs to the phosphatidylserine decarboxylase family. PSD-A subfamily. Heterodimer of a large membrane-associated beta subunit and a small pyruvoyl-containing alpha subunit. Pyruvate is required as a cofactor. In terms of processing, is synthesized initially as an inactive proenzyme. Formation of the active enzyme involves a self-maturation process in which the active site pyruvoyl group is generated from an internal serine residue via an autocatalytic post-translational modification. Two non-identical subunits are generated from the proenzyme in this reaction, and the pyruvate is formed at the N-terminus of the alpha chain, which is derived from the carboxyl end of the proenzyme. The post-translation cleavage follows an unusual pathway, termed non-hydrolytic serinolysis, in which the side chain hydroxyl group of the serine supplies its oxygen atom to form the C-terminus of the beta chain, while the remainder of the serine residue undergoes an oxidative deamination to produce ammonia and the pyruvoyl prosthetic group on the alpha chain.

It localises to the cell membrane. The catalysed reaction is a 1,2-diacyl-sn-glycero-3-phospho-L-serine + H(+) = a 1,2-diacyl-sn-glycero-3-phosphoethanolamine + CO2. The protein operates within phospholipid metabolism; phosphatidylethanolamine biosynthesis; phosphatidylethanolamine from CDP-diacylglycerol: step 2/2. Functionally, catalyzes the formation of phosphatidylethanolamine (PtdEtn) from phosphatidylserine (PtdSer). This chain is Phosphatidylserine decarboxylase proenzyme, found in Citrifermentans bemidjiense (strain ATCC BAA-1014 / DSM 16622 / JCM 12645 / Bem) (Geobacter bemidjiensis).